We begin with the raw amino-acid sequence, 145 residues long: Protein SprT-like (145 aa).

A SprT-like domain is found at 5–140 (DYVREVSLAD…ACGRCHGRLI (136 aa)). Position 64 (His-64) interacts with Zn(2+). Glu-65 is an active-site residue. His-68 provides a ligand contact to Zn(2+).

The protein belongs to the SprT family. Requires Zn(2+) as cofactor.

The protein localises to the cytoplasm. This Streptococcus equi subsp. equi (strain 4047) protein is Protein SprT-like.